Reading from the N-terminus, the 332-residue chain is UPF0194 membrane protein YbhG (332 aa).

The N-terminal stretch at 1 to 16 (MMKKPVVIGLAVVVLA) is a signal peptide. Residues 107-209 (NEEIAQAAAA…LNLQDSTLIA (103 aa)) are a coiled coil.

Belongs to the UPF0194 family.

It is found in the periplasm. The polypeptide is UPF0194 membrane protein YbhG (Escherichia coli (strain K12 / MC4100 / BW2952)).